A 342-amino-acid chain; its full sequence is Protein-glutamate methylesterase/protein-glutamine glutaminase 2 (342 aa).

One can recognise a Response regulatory domain in the interval 2–119; that stretch reads NIGIVNDLPL…GGSADPSQPL (118 aa). The residue at position 53 (Asp-53) is a 4-aspartylphosphate. The region spanning 144 to 337 is the CheB-type methylesterase domain; the sequence is PAPQGALPPL…DQLISLVQRN (194 aa). Catalysis depends on residues Ser-159, His-186, and Asp-279.

Belongs to the CheB family. Post-translationally, phosphorylated by CheA. Phosphorylation of the N-terminal regulatory domain activates the methylesterase activity.

The protein resides in the cytoplasm. The catalysed reaction is [protein]-L-glutamate 5-O-methyl ester + H2O = L-glutamyl-[protein] + methanol + H(+). It carries out the reaction L-glutaminyl-[protein] + H2O = L-glutamyl-[protein] + NH4(+). In terms of biological role, involved in chemotaxis. Part of a chemotaxis signal transduction system that modulates chemotaxis in response to various stimuli. Catalyzes the demethylation of specific methylglutamate residues introduced into the chemoreceptors (methyl-accepting chemotaxis proteins or MCP) by CheR. Also mediates the irreversible deamidation of specific glutamine residues to glutamic acid. The protein is Protein-glutamate methylesterase/protein-glutamine glutaminase 2 of Burkholderia mallei (strain ATCC 23344).